The following is a 123-amino-acid chain: uncharacterized protein (123 aa).

Positions 1–20 (MSPLIVGTLIIILLSGLATA) are cleaved as a signal peptide. Glycine 96 carries GPI-anchor amidated glycine lipidation. Residues 97-123 (SSPTTKRVIYIVMILLVLITLAVNLKH) constitute a propeptide, removed in mature form.

The protein localises to the cell membrane. This is an uncharacterized protein from Schizosaccharomyces pombe (strain 972 / ATCC 24843) (Fission yeast).